The chain runs to 34 residues: Photosystem II reaction center protein Psb30 (34 aa).

The chain crosses the membrane as a helical span at residues 5-25 (VLFQLTALIFVVAAGPLVIVL).

The protein belongs to the Psb30/Ycf12 family. In terms of assembly, PSII is composed of 1 copy each of membrane proteins PsbA, PsbB, PsbC, PsbD, PsbE, PsbF, PsbH, PsbI, PsbJ, PsbK, PsbL, PsbM, PsbT, PsbX, PsbY, PsbZ, Psb30/Ycf12, peripheral proteins of the oxygen-evolving complex and a large number of cofactors. It forms dimeric complexes.

The protein localises to the plastid. It is found in the chloroplast thylakoid membrane. In terms of biological role, a core subunit of photosystem II (PSII), probably helps stabilize the reaction center. In Tupiella akineta (Green alga), this protein is Photosystem II reaction center protein Psb30.